A 305-amino-acid chain; its full sequence is Nucleotide-binding protein Rxyl_2009 (305 aa).

An ATP-binding site is contributed by 24-31; sequence GLSGAGKS. 75–78 provides a ligand contact to GTP; the sequence is DIRG.

The protein belongs to the RapZ-like family.

Its function is as follows. Displays ATPase and GTPase activities. This chain is Nucleotide-binding protein Rxyl_2009, found in Rubrobacter xylanophilus (strain DSM 9941 / JCM 11954 / NBRC 16129 / PRD-1).